Reading from the N-terminus, the 543-residue chain is Methionine--tRNA ligase (543 aa).

Residues 13 to 23 (PYANGPLHVGH) carry the 'HIGH' region motif. Positions 145, 148, 158, and 161 each coordinate Zn(2+). Positions 334-338 (QFSKS) match the 'KMSKS' region motif. Lys337 provides a ligand contact to ATP.

Belongs to the class-I aminoacyl-tRNA synthetase family. MetG type 1 subfamily. Requires Zn(2+) as cofactor.

The protein localises to the cytoplasm. It carries out the reaction tRNA(Met) + L-methionine + ATP = L-methionyl-tRNA(Met) + AMP + diphosphate. In terms of biological role, is required not only for elongation of protein synthesis but also for the initiation of all mRNA translation through initiator tRNA(fMet) aminoacylation. In Thermoplasma volcanium (strain ATCC 51530 / DSM 4299 / JCM 9571 / NBRC 15438 / GSS1), this protein is Methionine--tRNA ligase.